The primary structure comprises 247 residues: 2,3-bisphosphoglycerate-dependent phosphoglycerate mutase (247 aa).

Residues 8-15 (RHGESTWN), 21-22 (TG), R60, 87-90 (ERHY), K98, 114-115 (RR), and 183-184 (GN) contribute to the substrate site. The active-site Tele-phosphohistidine intermediate is H9. The active-site Proton donor/acceptor is the E87.

Belongs to the phosphoglycerate mutase family. BPG-dependent PGAM subfamily. As to quaternary structure, homodimer.

The enzyme catalyses (2R)-2-phosphoglycerate = (2R)-3-phosphoglycerate. Its pathway is carbohydrate degradation; glycolysis; pyruvate from D-glyceraldehyde 3-phosphate: step 3/5. In terms of biological role, catalyzes the interconversion of 2-phosphoglycerate and 3-phosphoglycerate. The protein is 2,3-bisphosphoglycerate-dependent phosphoglycerate mutase of Paracidovorax citrulli (strain AAC00-1) (Acidovorax citrulli).